Here is a 427-residue protein sequence, read N- to C-terminus: Glutamate-1-semialdehyde 2,1-aminomutase (427 aa).

Position 265 is an N6-(pyridoxal phosphate)lysine (K265).

It belongs to the class-III pyridoxal-phosphate-dependent aminotransferase family. HemL subfamily. Homodimer. The cofactor is pyridoxal 5'-phosphate.

It localises to the cytoplasm. The catalysed reaction is (S)-4-amino-5-oxopentanoate = 5-aminolevulinate. Its pathway is porphyrin-containing compound metabolism; protoporphyrin-IX biosynthesis; 5-aminolevulinate from L-glutamyl-tRNA(Glu): step 2/2. The polypeptide is Glutamate-1-semialdehyde 2,1-aminomutase (Mannheimia succiniciproducens (strain KCTC 0769BP / MBEL55E)).